Here is a 174-residue protein sequence, read N- to C-terminus: NADH-quinone oxidoreductase subunit I (174 aa).

2 4Fe-4S ferredoxin-type domains span residues Leu44–Asp74 and Arg90–Asp119. [4Fe-4S] cluster contacts are provided by Cys54, Cys57, Cys60, Cys64, Cys99, Cys102, Cys105, and Cys109.

Belongs to the complex I 23 kDa subunit family. NDH-1 is composed of 14 different subunits. Subunits NuoA, H, J, K, L, M, N constitute the membrane sector of the complex. [4Fe-4S] cluster is required as a cofactor.

It localises to the cell membrane. It catalyses the reaction a quinone + NADH + 5 H(+)(in) = a quinol + NAD(+) + 4 H(+)(out). Functionally, NDH-1 shuttles electrons from NADH, via FMN and iron-sulfur (Fe-S) centers, to quinones in the respiratory chain. The immediate electron acceptor for the enzyme in this species is believed to be menaquinone. Couples the redox reaction to proton translocation (for every two electrons transferred, four hydrogen ions are translocated across the cytoplasmic membrane), and thus conserves the redox energy in a proton gradient. The chain is NADH-quinone oxidoreductase subunit I from Mycobacterium sp. (strain KMS).